The chain runs to 695 residues: Follicle-stimulating hormone receptor (695 aa).

Residues 1–17 (MALLLVALLAFLSLGSG) form the signal peptide. Disulfide bonds link Cys18-Cys25 and Cys23-Cys32. Residues 18–46 (CHHRLCHCSNGVFLCQESKVTEIPSDLPR) enclose the LRRNT domain. At 18-366 (CHHRLCHCSN…EDIMGDDILR (349 aa)) the chain is on the extracellular side. 9 LRR repeats span residues 49–72 (VELR…FGDL), 73–97 (EKIE…LPKL), 98–118 (HEIR…AFQN), 119–143 (LPNL…KIQS), 144–169 (LQKV…MGLS), 170–192 (FESM…AFNG), 193–216 (TQLD…VFQG), 217–240 (ASGP…GLEN), and 241–259 (LKKL…PSLE). 2 N-linked (GlcNAc...) asparagine glycosylation sites follow: Asn191 and Asn199. Intrachain disulfides connect Cys275/Cys346, Cys276/Cys292, Cys276/Cys356, and Cys292/Cys338. Asn293 carries an N-linked (GlcNAc...) asparagine glycan. At Tyr335 the chain carries Sulfotyrosine. Residues 367 to 387 (VLIWFISILAITGNILVLVIL) traverse the membrane as a helical segment. The Cytoplasmic portion of the chain corresponds to 388–398 (ITSQYKLTVPR). Residues 399-421 (FLMCNLAFADLCIGIYLLLIASV) traverse the membrane as a helical segment. At 422 to 443 (DVHTKTEYHNYAIDWQTGAGCD) the chain is on the extracellular side. A disulfide bond links Cys442 and Cys517. A helical membrane pass occupies residues 444–465 (AAGFFTVFASELSVYTLTAITL). Residues 466–485 (ERWHTITHAMQLECKVQLRH) lie on the Cytoplasmic side of the membrane. The helical transmembrane segment at 486–508 (AASIMLVGWIFAFAVALFPIFGI) threads the bilayer. Over 509 to 528 (SSYMKVSICLPMDIDSPLSQ) the chain is Extracellular. Residues 529-550 (LYVMSLLVLNVLAFVVICGCYT) traverse the membrane as a helical segment. The Cytoplasmic portion of the chain corresponds to 551–573 (HIYLTVRNPNITSSSSDTKIAKR). A helical transmembrane segment spans residues 574 to 597 (MAMLIFTDFLCMAPISFFAISASL). Over 598–608 (KVPLITVSKSK) the chain is Extracellular. A helical membrane pass occupies residues 609-630 (ILLVLFYPINSCANPFLYAIFT). At 631 to 695 (KNFRRDFFIL…LIPLRHLAKN (65 aa)) the chain is on the cytoplasmic side.

It belongs to the G-protein coupled receptor 1 family. FSH/LSH/TSH subfamily. Homotrimer. Functions as a homotrimer binding the FSH hormone heterodimer composed of CGA and FSHB. Interacts with ARRB2. Interacts with APPL2; interaction is independent of follicle stimulating hormone stimulation. Post-translationally, N-glycosylated; indirectly required for FSH-binding, possibly via a conformational change that allows high affinity binding of hormone. In terms of processing, sulfated.

It is found in the cell membrane. Functionally, g protein-coupled receptor for follitropin, the follicle-stimulating hormone. Through cAMP production activates the downstream PI3K-AKT and ERK1/ERK2 signaling pathways. The chain is Follicle-stimulating hormone receptor (FSHR) from Bos taurus (Bovine).